Here is a 400-residue protein sequence, read N- to C-terminus: Probable RNA polymerase sigma factor RfaY (400 aa).

The Polymerase core binding signature appears at 62-75; that stretch reads WQRLAQLHQPASFL. The segment at residues 165–184 is a DNA-binding region (H-T-H motif); the sequence is SDAAVRKRLSRARATVRNEL.

This sequence belongs to the sigma-70 factor family. ECF subfamily.

Its function is as follows. Sigma factors are initiation factors that promote the attachment of RNA polymerase to specific initiation sites and are then released. This sigma factor is involved in lipopolysaccharide biosynthesis and pathogenicity. The sequence is that of Probable RNA polymerase sigma factor RfaY (rfaY) from Xanthomonas campestris pv. campestris (strain ATCC 33913 / DSM 3586 / NCPPB 528 / LMG 568 / P 25).